A 152-amino-acid chain; its full sequence is Lipoprotein signal peptidase (152 aa).

2 consecutive transmembrane segments (helical) span residues 55 to 75 (NGRWFFVAVAALAVAGILYYL) and 87 to 107 (VALGLVMGGAVGNMIDRIATG). Active-site residues include aspartate 111 and aspartate 129. A helical membrane pass occupies residues 125-145 (FNVADICVTVGVGLLFLHLVL).

This sequence belongs to the peptidase A8 family.

It is found in the cell membrane. It catalyses the reaction Release of signal peptides from bacterial membrane prolipoproteins. Hydrolyzes -Xaa-Yaa-Zaa-|-(S,diacylglyceryl)Cys-, in which Xaa is hydrophobic (preferably Leu), and Yaa (Ala or Ser) and Zaa (Gly or Ala) have small, neutral side chains.. Its pathway is protein modification; lipoprotein biosynthesis (signal peptide cleavage). In terms of biological role, this protein specifically catalyzes the removal of signal peptides from prolipoproteins. The sequence is that of Lipoprotein signal peptidase from Symbiobacterium thermophilum (strain DSM 24528 / JCM 14929 / IAM 14863 / T).